We begin with the raw amino-acid sequence, 221 residues long: Octanoyltransferase (221 aa).

The region spanning 35-221 (ESYENRIIFC…RELLAALLSK (187 aa)) is the BPL/LPL catalytic domain. Substrate contacts are provided by residues 80 to 87 (RGGDITYH), 152 to 154 (AIG), and 165 to 167 (GLA). Residue Cys-183 is the Acyl-thioester intermediate of the active site.

This sequence belongs to the LipB family.

It is found in the cytoplasm. The catalysed reaction is octanoyl-[ACP] + L-lysyl-[protein] = N(6)-octanoyl-L-lysyl-[protein] + holo-[ACP] + H(+). The protein operates within protein modification; protein lipoylation via endogenous pathway; protein N(6)-(lipoyl)lysine from octanoyl-[acyl-carrier-protein]: step 1/2. Functionally, catalyzes the transfer of endogenously produced octanoic acid from octanoyl-acyl-carrier-protein onto the lipoyl domains of lipoate-dependent enzymes. Lipoyl-ACP can also act as a substrate although octanoyl-ACP is likely to be the physiological substrate. The sequence is that of Octanoyltransferase from Bacteroides fragilis (strain YCH46).